Reading from the N-terminus, the 136-residue chain is General odorant-binding protein 57d (136 aa).

Positions 1 to 29 are cleaved as a signal peptide; sequence MPEKMSLRLVPHLACIIFILEIQFRIADS. Disulfide bonds link Cys-33-Cys-70, Cys-66-Cys-118, and Cys-107-Cys-127.

This sequence belongs to the PBP/GOBP family.

Its function is as follows. Present in the aqueous fluid surrounding olfactory sensory dendrites and are thought to aid in the capture and transport of hydrophobic odorants into and through this fluid. The polypeptide is General odorant-binding protein 57d (Drosophila melanogaster (Fruit fly)).